Consider the following 278-residue polypeptide: Orotidine 5'-phosphate decarboxylase (278 aa).

Lys-95 functions as the Proton donor in the catalytic mechanism.

Belongs to the OMP decarboxylase family. Type 2 subfamily.

It carries out the reaction orotidine 5'-phosphate + H(+) = UMP + CO2. It functions in the pathway pyrimidine metabolism; UMP biosynthesis via de novo pathway; UMP from orotate: step 2/2. In Corynebacterium glutamicum (strain R), this protein is Orotidine 5'-phosphate decarboxylase.